The chain runs to 81 residues: ATP synthase subunit c (81 aa).

2 helical membrane-spanning segments follow: residues 7 to 27 (AASV…PGLG) and 57 to 77 (FAFM…LLFA).

Belongs to the ATPase C chain family. F-type ATPases have 2 components, F(1) - the catalytic core - and F(0) - the membrane proton channel. F(1) has five subunits: alpha(3), beta(3), gamma(1), delta(1), epsilon(1). F(0) has four main subunits: a(1), b(1), b'(1) and c(10-14). The alpha and beta chains form an alternating ring which encloses part of the gamma chain. F(1) is attached to F(0) by a central stalk formed by the gamma and epsilon chains, while a peripheral stalk is formed by the delta, b and b' chains.

The protein localises to the cellular thylakoid membrane. F(1)F(0) ATP synthase produces ATP from ADP in the presence of a proton or sodium gradient. F-type ATPases consist of two structural domains, F(1) containing the extramembraneous catalytic core and F(0) containing the membrane proton channel, linked together by a central stalk and a peripheral stalk. During catalysis, ATP synthesis in the catalytic domain of F(1) is coupled via a rotary mechanism of the central stalk subunits to proton translocation. Its function is as follows. Key component of the F(0) channel; it plays a direct role in translocation across the membrane. A homomeric c-ring of between 10-14 subunits forms the central stalk rotor element with the F(1) delta and epsilon subunits. This Prochlorococcus marinus (strain MIT 9301) protein is ATP synthase subunit c.